The sequence spans 196 residues: ATP-dependent Clp protease proteolytic subunit (196 aa).

The active-site Nucleophile is S101. Residue H126 is part of the active site.

This sequence belongs to the peptidase S14 family. In terms of assembly, component of the chloroplastic Clp protease core complex.

The protein resides in the plastid. The protein localises to the chloroplast stroma. It carries out the reaction Hydrolysis of proteins to small peptides in the presence of ATP and magnesium. alpha-casein is the usual test substrate. In the absence of ATP, only oligopeptides shorter than five residues are hydrolyzed (such as succinyl-Leu-Tyr-|-NHMec, and Leu-Tyr-Leu-|-Tyr-Trp, in which cleavage of the -Tyr-|-Leu- and -Tyr-|-Trp bonds also occurs).. Functionally, cleaves peptides in various proteins in a process that requires ATP hydrolysis. Has a chymotrypsin-like activity. Plays a major role in the degradation of misfolded proteins. This is ATP-dependent Clp protease proteolytic subunit from Lotus japonicus (Lotus corniculatus var. japonicus).